A 370-amino-acid polypeptide reads, in one-letter code: ATP/GTP phosphatase (370 aa).

It catalyses the reaction ATP + H2O = ADP + phosphate + H(+). It carries out the reaction GTP + H2O = GDP + phosphate + H(+). Its function is as follows. Has nucleotide phosphatase activity toward ATP and GTP, but not toward CTP, TTP and ADP. In Helicobacter pylori (strain ATCC 700392 / 26695) (Campylobacter pylori), this protein is ATP/GTP phosphatase.